A 108-amino-acid polypeptide reads, in one-letter code: uncharacterized protein (108 aa).

This is an uncharacterized protein from Acanthamoeba polyphaga mimivirus (APMV).